A 51-amino-acid polypeptide reads, in one-letter code: GDIIDVDNDLFEHEQDGVAGTSVHGEYEAYDAYGNEYEVKYIADHLGFRVL.

The 51-residue stretch at 1 to 51 (GDIIDVDNDLFEHEQDGVAGTSVHGEYEAYDAYGNEYEVKYIADHLGFRVL) folds into the Chitin-binding type R&amp;R domain.

In terms of tissue distribution, calcified shell.

This is Cuticle protein CP575 from Cancer pagurus (Rock crab).